Here is a 171-residue protein sequence, read N- to C-terminus: Neuronal vesicle trafficking-associated protein 2 (171 aa).

The disordered stretch occupies residues M1–G21. Topologically, residues M1–T71 are cytoplasmic. The chain crosses the membrane as a helical; Signal-anchor for type II membrane protein span at residues V72 to Y92. The Lumenal portion of the chain corresponds to K93 to H171.

The protein belongs to the NSG family.

Its subcellular location is the membrane. It localises to the golgi apparatus. The protein resides in the trans-Golgi network membrane. It is found in the cell projection. The protein localises to the dendrite. Its subcellular location is the endosome membrane. It localises to the early endosome membrane. The protein resides in the late endosome membrane. It is found in the lysosome lumen. The protein localises to the cytoplasmic vesicle membrane. Its subcellular location is the golgi stack membrane. It localises to the endosome. The protein resides in the multivesicular body membrane. This is Neuronal vesicle trafficking-associated protein 2 from Rattus norvegicus (Rat).